Consider the following 191-residue polypeptide: UPF0398 protein LCABL_17010 (191 aa).

Belongs to the UPF0398 family.

This chain is UPF0398 protein LCABL_17010, found in Lacticaseibacillus casei (strain BL23) (Lactobacillus casei).